Here is a 205-residue protein sequence, read N- to C-terminus: Cyanate hydratase (205 aa).

Residues Arg-133, Glu-136, and Ser-159 contribute to the active site.

Belongs to the cyanase family.

It carries out the reaction cyanate + hydrogencarbonate + 3 H(+) = NH4(+) + 2 CO2. In terms of biological role, catalyzes the reaction of cyanate with bicarbonate to produce ammonia and carbon dioxide. This chain is Cyanate hydratase, found in Thalassiosira pseudonana (Marine diatom).